A 142-amino-acid polypeptide reads, in one-letter code: Small ribosomal subunit protein uS8c (142 aa).

The protein belongs to the universal ribosomal protein uS8 family. Part of the 30S ribosomal subunit.

The protein resides in the plastid. In terms of biological role, one of the primary rRNA binding proteins, it binds directly to 16S rRNA central domain where it helps coordinate assembly of the platform of the 30S subunit. This Euglena longa (Euglenophycean alga) protein is Small ribosomal subunit protein uS8c (rps8).